The sequence spans 61 residues: Chi-conotoxin MrIA (61 aa).

The N-terminal stretch at 1–19 is a signal peptide; the sequence is MRCLPVLIILLLLTASAPG. The propeptide occupies 20–48; it reads VVVLPKTEDDVPMSSVYGNGKSILRGILR. Intrachain disulfides connect Cys-52–Cys-61 and Cys-53–Cys-58. 4-hydroxyproline is present on Pro-60.

It belongs to the conotoxin T superfamily. As to expression, expressed by the venom duct.

It is found in the secreted. In terms of biological role, chi-conotoxins inhibit the neuronal noradrenaline transporter (NET/SLC6A2). Activity has been described on both human (inhibition of norepinephrine uptake is IC(50)=1.26 uM) and rat (pIC(50)=6.21 corresponding IC(50)=0.16 uM) transporters. Acts as a reversible non-competitive inhibitor. The sequence is that of Chi-conotoxin MrIA from Conus marmoreus (Marble cone).